Here is an 87-residue protein sequence, read N- to C-terminus: MNSLLMITACLFLIGTVWAKEGYLVNKSTGCKYGCLKLGENEGCDKECKAKNQGGSYGYCYAFACWCEGLPESTPTYPLPNKSCGKK.

A signal peptide spans 1–19 (MNSLLMITACLFLIGTVWA). In terms of domain architecture, LCN-type CS-alpha/beta spans 20 to 85 (KEGYLVNKST…TYPLPNKSCG (66 aa)). 4 cysteine pairs are disulfide-bonded: C31-C84, C35-C60, C44-C65, and C48-C67. Residue C84 is modified to Cysteine amide.

This sequence belongs to the long (4 C-C) scorpion toxin superfamily. Sodium channel inhibitor family. Beta subfamily. Expressed by the venom gland.

The protein localises to the secreted. In terms of biological role, beta toxins bind voltage-independently at site-4 of sodium channels (Nav) and shift the voltage of activation toward more negative potentials thereby affecting sodium channel activation and promoting spontaneous and repetitive firing. Induces immediate paralysis in crickets after injection, with a total paralysis occurring within 15-30 minutes and lasting for 1-2 hours. Is also lethal to vertebrate (chicks) when injected in very high dosages (more that 100 mg/kg). This chain is Toxin CsEv3, found in Centruroides sculpturatus (Arizona bark scorpion).